Reading from the N-terminus, the 515-residue chain is Bifunctional purine biosynthesis protein PurH (515 aa).

Residues Met1 to Val145 enclose the MGS-like domain.

It belongs to the PurH family.

It catalyses the reaction (6R)-10-formyltetrahydrofolate + 5-amino-1-(5-phospho-beta-D-ribosyl)imidazole-4-carboxamide = 5-formamido-1-(5-phospho-D-ribosyl)imidazole-4-carboxamide + (6S)-5,6,7,8-tetrahydrofolate. The enzyme catalyses IMP + H2O = 5-formamido-1-(5-phospho-D-ribosyl)imidazole-4-carboxamide. Its pathway is purine metabolism; IMP biosynthesis via de novo pathway; 5-formamido-1-(5-phospho-D-ribosyl)imidazole-4-carboxamide from 5-amino-1-(5-phospho-D-ribosyl)imidazole-4-carboxamide (10-formyl THF route): step 1/1. The protein operates within purine metabolism; IMP biosynthesis via de novo pathway; IMP from 5-formamido-1-(5-phospho-D-ribosyl)imidazole-4-carboxamide: step 1/1. This chain is Bifunctional purine biosynthesis protein PurH, found in Streptococcus pyogenes serotype M18 (strain MGAS8232).